Reading from the N-terminus, the 291-residue chain is Protein CMSS1 (291 aa).

Residues 1-96 (MADDLGDEWW…KKTITDVLTS (96 aa)) are disordered. Acidic residues predominate over residues 17–27 (DVPEVEEETEH). Residues 58-79 (VKKECFITQERSEEKPDNESNK) are compositionally biased toward basic and acidic residues.

The protein belongs to the CMS1 family.

In Danio rerio (Zebrafish), this protein is Protein CMSS1 (cmss1).